Reading from the N-terminus, the 149-residue chain is Ribonuclease HI (149 aa).

Positions 1 to 140 constitute an RNase H type-1 domain; sequence MIIGYFDGLC…AYELVRRGKL (140 aa). Residues aspartate 7, glutamate 52, aspartate 76, and aspartate 125 each coordinate Mg(2+). The Mn(2+) site is built by aspartate 7, glutamate 52, aspartate 76, and aspartate 125. Cysteines 58 and 145 form a disulfide.

Monomer. Mn(2+) serves as cofactor. Mg(2+) is required as a cofactor. It depends on Co(2+) as a cofactor. The cofactor is Ni(2+). In terms of processing, the disulfide bond confers considerable stability to the protein.

The protein localises to the cytoplasm. The enzyme catalyses Endonucleolytic cleavage to 5'-phosphomonoester.. In terms of biological role, nuclease that specifically degrades the RNA of RNA-DNA hybrids. Endonucleolytically removes RNA primers from the Okazaki fragments of lagging strand synthesis on its own. In the presence of Mn(2+) or Co(2+) can also cleave an RNA-RNA hybrid; the dsRNase activity is 10- 100-fold lower than RNase H activity. Complements the temperature-sensitive phenotype of an E.coli double rnhA/rnhB (RNase H) disruption mutant. This is Ribonuclease HI (rnhA) from Sulfurisphaera tokodaii (strain DSM 16993 / JCM 10545 / NBRC 100140 / 7) (Sulfolobus tokodaii).